A 679-amino-acid polypeptide reads, in one-letter code: Leucine-rich repeat, immunoglobulin-like domain and transmembrane domain-containing protein 3 (679 aa).

A signal peptide spans Met-1 to Cys-19. At Leu-20–Ser-582 the chain is on the lumenal side. LRR repeat units follow at residues Pro-56 to Tyr-79, Leu-80 to Asn-103, Leu-104 to Met-128, Pro-129 to Tyr-151, and Leu-152 to Ser-175. In terms of domain architecture, LRRCT spans Asn-201–Lys-253. Residues Pro-254–Thr-344 form the Ig-like domain. The cysteines at positions 275 and 328 are disulfide-linked. Residue Asn-296 is glycosylated (N-linked (GlcNAc...) asparagine). Positions Thr-351–Arg-375 are disordered. Residues Thr-357 to Trp-367 are compositionally biased toward basic and acidic residues. The region spanning Ala-486–Val-574 is the Fibronectin type-III domain. The helical transmembrane segment at Leu-583–Leu-603 threads the bilayer. Residues Tyr-604–Cys-679 lie on the Cytoplasmic side of the membrane.

Post-translationally, glycosylated. As to expression, detected in the outer plexiform layer (OPL) of the retina where it localizes to ON-bipolar cells (at protein level).

Its subcellular location is the cell projection. The protein resides in the dendrite. It localises to the perikaryon. The protein localises to the endoplasmic reticulum membrane. Functionally, plays a role in the synapse formation and synaptic transmission between cone photoreceptor cells and retinal bipolar cells. Required for normal transmission of a light-evoked stimulus from the cone photoreceptor cells to the ON-bipolar cells and ON-ganglion cells in the inner retina. Required in retinal ON-bipolar cells for normal localization of the cation channel TRPM1 at dendrite tips. Seems to play a specific role in synaptic contacts made by ON-bipolar cells with cone photoreceptor pedicles. May also have a role in cone synapse formation. Might facilitate FGFR1 exit from the endoplasmic reticulum to the Golgi. Could be a regulator of the FGFRs. The polypeptide is Leucine-rich repeat, immunoglobulin-like domain and transmembrane domain-containing protein 3 (LRIT3) (Homo sapiens (Human)).